A 487-amino-acid chain; its full sequence is Adenylosuccinate synthetase, chloroplastic (487 aa).

Residues M1 to S46 constitute a chloroplast transit peptide. GTP is bound by residues G74–K80 and G102–T104. D75 functions as the Proton acceptor in the catalytic mechanism. Residues D75 and G102 each contribute to the Mg(2+) site. IMP-binding positions include D75–K78, N100–H103, T192, R206, Q286, T301, and R365. Catalysis depends on H103, which acts as the Proton donor. Substrate is bound at residue T361–R367. Residues R367, K393 to D395, and G476 to G478 each bind GTP.

It belongs to the adenylosuccinate synthetase family. As to quaternary structure, homodimer. Mg(2+) serves as cofactor.

It is found in the plastid. The protein localises to the chloroplast. It carries out the reaction IMP + L-aspartate + GTP = N(6)-(1,2-dicarboxyethyl)-AMP + GDP + phosphate + 2 H(+). The protein operates within purine metabolism; AMP biosynthesis via de novo pathway; AMP from IMP: step 1/2. Its function is as follows. Plays an important role in the de novo pathway and in the salvage pathway of purine nucleotide biosynthesis. Catalyzes the first committed step in the biosynthesis of AMP from IMP. The chain is Adenylosuccinate synthetase, chloroplastic from Oryza sativa subsp. indica (Rice).